Consider the following 735-residue polypeptide: Transcription factor RFX4 (735 aa).

A disordered region spans residues 27–59 (NKRYSSHTSLGNVSNDENEEKENNRASKPHSTP). The span at 32–41 (SHTSLGNVSN) shows a compositional bias: polar residues. The DNA-binding element occupies 44–126 (NEEKENNRAS…RRLGTRGQSK (83 aa)). A DNA-binding region (RFX-type winged-helix) is located at residues 61 to 136 (TLQWLEENYE…YHYYGIAVKE (76 aa)). A necessary for dimerization region spans residues 315–487 (RFSQILRRQT…NELMRAMKGE (173 aa)). A disordered region spans residues 501–538 (EATPPTPSPGPSFSPAKSATSVEVPPPSSPVSNPSPEY).

The protein belongs to the RFX family. As to quaternary structure, homodimer. Heterodimer with RFX2 and RFX3. Binds DNA. Interacts with GPS2. In terms of tissue distribution, isoform 1: Brain-specific. Isoform 2: Testis-specific. Isoform 1: Highly expressed in the suprachiasmatic nucleus, the central pacemaker site of the circadian clock (at protein level).

It is found in the nucleus. Transcription factor that plays a role in early brain development. May activate transcription by interacting directly with the X-box. May activate transcription from CX3CL1 promoter through the X-box during brain development. May be required for neural tube ciliogenesis during embryogenesis. The protein is Transcription factor RFX4 (Rfx4) of Mus musculus (Mouse).